Reading from the N-terminus, the 284-residue chain is Bifunctional protein FolD (284 aa).

Residues 166-168 (GAS), Ser191, and Ile232 each bind NADP(+).

Belongs to the tetrahydrofolate dehydrogenase/cyclohydrolase family. In terms of assembly, homodimer.

It catalyses the reaction (6R)-5,10-methylene-5,6,7,8-tetrahydrofolate + NADP(+) = (6R)-5,10-methenyltetrahydrofolate + NADPH. The catalysed reaction is (6R)-5,10-methenyltetrahydrofolate + H2O = (6R)-10-formyltetrahydrofolate + H(+). Its pathway is one-carbon metabolism; tetrahydrofolate interconversion. Catalyzes the oxidation of 5,10-methylenetetrahydrofolate to 5,10-methenyltetrahydrofolate and then the hydrolysis of 5,10-methenyltetrahydrofolate to 10-formyltetrahydrofolate. The protein is Bifunctional protein FolD of Neisseria meningitidis serogroup A / serotype 4A (strain DSM 15465 / Z2491).